A 159-amino-acid polypeptide reads, in one-letter code: Ribosomal RNA large subunit methyltransferase H (159 aa).

S-adenosyl-L-methionine is bound by residues Leu76, Gly108, and 127 to 132 (FSKMTF).

Belongs to the RNA methyltransferase RlmH family. In terms of assembly, homodimer.

Its subcellular location is the cytoplasm. The enzyme catalyses pseudouridine(1915) in 23S rRNA + S-adenosyl-L-methionine = N(3)-methylpseudouridine(1915) in 23S rRNA + S-adenosyl-L-homocysteine + H(+). Specifically methylates the pseudouridine at position 1915 (m3Psi1915) in 23S rRNA. The chain is Ribosomal RNA large subunit methyltransferase H from Clostridium kluyveri (strain NBRC 12016).